The chain runs to 658 residues: Carnitine O-palmitoyltransferase 2, mitochondrial (658 aa).

Residues 1–25 (MVARLLLRSWSRGLAVGPGAPCRPL) constitute a mitochondrion transit peptide. Over 26–178 (STGFEPSQYL…DLLEPEVFHL (153 aa)) the chain is Mitochondrial matrix. Lys69 bears the N6-succinyllysine mark. Lys79 carries the post-translational modification N6-acetyllysine. Lys85 is subject to N6-succinyllysine. Positions 179-208 (NPAKSDTDTFKRFIRFVPSFLSWYGAYLVN) form an intramembrane region, note=Mitochondrial inner membrane. The Mitochondrial matrix segment spans residues 209-658 (AYPLDMSQYY…DALEGKMIKT (450 aa)). Lys239 carries the post-translational modification N6-acetyllysine; alternate. At Lys239 the chain carries N6-succinyllysine; alternate. Residue His372 is the Proton acceptor of the active site. Position 418 is an N6-acetyllysine; alternate (Lys418). N6-succinyllysine; alternate is present on Lys418. Residues Lys424 and Lys439 each carry the N6-succinyllysine modification. Position 452-464 (452-464 (GREFLKKQKLSPD)) interacts with CoA. 3 residues coordinate (R)-carnitine: Tyr486, Ser488, and Thr499. Lys510 is subject to N6-acetyllysine; alternate. An N6-succinyllysine; alternate modification is found at Lys510.

Belongs to the carnitine/choline acetyltransferase family.

It localises to the mitochondrion inner membrane. It catalyses the reaction (R)-carnitine + hexadecanoyl-CoA = O-hexadecanoyl-(R)-carnitine + CoA. The catalysed reaction is octanoyl-CoA + (R)-carnitine = O-octanoyl-(R)-carnitine + CoA. The enzyme catalyses decanoyl-CoA + (R)-carnitine = O-decanoyl-(R)-carnitine + CoA. It carries out the reaction dodecanoyl-CoA + (R)-carnitine = O-dodecanoyl-R-carnitine + CoA. It catalyses the reaction tetradecanoyl-CoA + (R)-carnitine = O-tetradecanoyl-(R)-carnitine + CoA. The catalysed reaction is (R)-carnitine + octadecanoyl-CoA = O-octadecanoyl-(R)-carnitine + CoA. The enzyme catalyses eicosanoyl-CoA + (R)-carnitine = O-eicosanoyl-(R)-carnitine + CoA. It carries out the reaction (9Z)-tetradecenoyl-CoA + (R)-carnitine = O-(9Z)-tetradecenoyl-(R)-carnitine + CoA. It catalyses the reaction (5Z)-tetradecenoyl-CoA + (R)-carnitine = O-(5Z)-tetradecenoyl-(R)-carnitine + CoA. The catalysed reaction is (R)-carnitine + (9Z)-octadecenoyl-CoA = O-(9Z)-octadecenoyl-(R)-carnitine + CoA. The enzyme catalyses 4,8-dimethylnonanoyl-CoA + (R)-carnitine = O-4,8-dimethylnonanoyl-(R)-carnitine + CoA. The protein operates within lipid metabolism; fatty acid beta-oxidation. Its function is as follows. Involved in the intramitochondrial synthesis of acylcarnitines from accumulated acyl-CoA metabolites. Reconverts acylcarnitines back into the respective acyl-CoA esters that can then undergo beta-oxidation, an essential step for the mitochondrial uptake of long-chain fatty acids and their subsequent beta-oxidation in the mitochondrion. Active with medium (C8-C12) and long-chain (C14-C18) acyl-CoA esters. The protein is Carnitine O-palmitoyltransferase 2, mitochondrial (CPT2) of Bos taurus (Bovine).